A 256-amino-acid polypeptide reads, in one-letter code: Imidazole glycerol phosphate synthase subunit HisF (256 aa).

Catalysis depends on residues Asp12 and Asp131.

It belongs to the HisA/HisF family. As to quaternary structure, heterodimer of HisH and HisF.

The protein resides in the cytoplasm. The catalysed reaction is 5-[(5-phospho-1-deoxy-D-ribulos-1-ylimino)methylamino]-1-(5-phospho-beta-D-ribosyl)imidazole-4-carboxamide + L-glutamine = D-erythro-1-(imidazol-4-yl)glycerol 3-phosphate + 5-amino-1-(5-phospho-beta-D-ribosyl)imidazole-4-carboxamide + L-glutamate + H(+). The protein operates within amino-acid biosynthesis; L-histidine biosynthesis; L-histidine from 5-phospho-alpha-D-ribose 1-diphosphate: step 5/9. Functionally, IGPS catalyzes the conversion of PRFAR and glutamine to IGP, AICAR and glutamate. The HisF subunit catalyzes the cyclization activity that produces IGP and AICAR from PRFAR using the ammonia provided by the HisH subunit. This chain is Imidazole glycerol phosphate synthase subunit HisF, found in Pseudomonas entomophila (strain L48).